The following is a 1307-amino-acid chain: Rab3 GTPase-activating protein regulatory subunit (1307 aa).

The protein belongs to the Rab3-GAP regulatory subunit family. The Rab3 GTPase-activating complex is a heterodimer composed of rbg-1 and rbg-2.

Its subcellular location is the cytoplasm. Its function is as follows. Probable regulatory subunit of a GTPase activating protein that has specificity for Rab3 subfamily. Rab3 proteins are involved in regulated exocytosis of neurotransmitters and hormones. Rab3 GTPase-activating complex specifically converts active Rab3-GTP to the inactive form Rab3-GDP. This is Rab3 GTPase-activating protein regulatory subunit (rbg-2) from Caenorhabditis elegans.